The sequence spans 240 residues: NAD(P)H-hydrate epimerase (240 aa).

The region spanning A15 to P224 is the YjeF N-terminal domain. N66 to D70 is a binding site for (6S)-NADPHX. The K(+) site is built by Q67 and D129. Residues G133–E139 and D162 each bind (6S)-NADPHX. Residue S165 coordinates K(+).

It belongs to the NnrE/AIBP family. K(+) is required as a cofactor.

Its subcellular location is the cytoplasm. The protein localises to the mitochondrion. The catalysed reaction is (6R)-NADHX = (6S)-NADHX. It carries out the reaction (6R)-NADPHX = (6S)-NADPHX. Catalyzes the epimerization of the S- and R-forms of NAD(P)HX, a damaged form of NAD(P)H that is a result of enzymatic or heat-dependent hydration. This is a prerequisite for the S-specific NAD(P)H-hydrate dehydratase to allow the repair of both epimers of NAD(P)HX. This Puccinia graminis f. sp. tritici (strain CRL 75-36-700-3 / race SCCL) (Black stem rust fungus) protein is NAD(P)H-hydrate epimerase.